A 275-amino-acid chain; its full sequence is Phosphonoacetaldehyde hydrolase (275 aa).

Asp15 (nucleophile) is an active-site residue. The Mg(2+) site is built by Asp15 and Ala17. Residue Lys56 is the Schiff-base intermediate with substrate of the active site. Residue Asp189 coordinates Mg(2+).

The protein belongs to the HAD-like hydrolase superfamily. PhnX family. As to quaternary structure, homodimer. Mg(2+) is required as a cofactor.

The catalysed reaction is phosphonoacetaldehyde + H2O = acetaldehyde + phosphate + H(+). Functionally, involved in phosphonate degradation. The protein is Phosphonoacetaldehyde hydrolase of Pseudomonas fluorescens (strain Pf0-1).